The following is a 342-amino-acid chain: Holliday junction branch migration complex subunit RuvB (342 aa).

Residues 1–185 (MTVKPLRDVT…FPIQERLEYY (185 aa)) are large ATPase domain (RuvB-L). ATP contacts are provided by residues Leu24, Arg25, Gly66, Lys69, Thr70, Ser71, 132–134 (EDY), Arg175, Tyr185, and Arg222. Position 70 (Thr70) interacts with Mg(2+). Positions 186–256 (GPAELKEIAV…VVDRTLRRLE (71 aa)) are small ATPAse domain (RuvB-S). Residues 259-342 (ARGLDAMDRR…RSGGKQGSLV (84 aa)) form a head domain (RuvB-H) region. 2 residues coordinate DNA: Arg314 and Arg319.

This sequence belongs to the RuvB family. Homohexamer. Forms an RuvA(8)-RuvB(12)-Holliday junction (HJ) complex. HJ DNA is sandwiched between 2 RuvA tetramers; dsDNA enters through RuvA and exits via RuvB. An RuvB hexamer assembles on each DNA strand where it exits the tetramer. Each RuvB hexamer is contacted by two RuvA subunits (via domain III) on 2 adjacent RuvB subunits; this complex drives branch migration. In the full resolvosome a probable DNA-RuvA(4)-RuvB(12)-RuvC(2) complex forms which resolves the HJ.

The protein localises to the cytoplasm. It catalyses the reaction ATP + H2O = ADP + phosphate + H(+). Its function is as follows. The RuvA-RuvB-RuvC complex processes Holliday junction (HJ) DNA during genetic recombination and DNA repair, while the RuvA-RuvB complex plays an important role in the rescue of blocked DNA replication forks via replication fork reversal (RFR). RuvA specifically binds to HJ cruciform DNA, conferring on it an open structure. The RuvB hexamer acts as an ATP-dependent pump, pulling dsDNA into and through the RuvAB complex. RuvB forms 2 homohexamers on either side of HJ DNA bound by 1 or 2 RuvA tetramers; 4 subunits per hexamer contact DNA at a time. Coordinated motions by a converter formed by DNA-disengaged RuvB subunits stimulates ATP hydrolysis and nucleotide exchange. Immobilization of the converter enables RuvB to convert the ATP-contained energy into a lever motion, pulling 2 nucleotides of DNA out of the RuvA tetramer per ATP hydrolyzed, thus driving DNA branch migration. The RuvB motors rotate together with the DNA substrate, which together with the progressing nucleotide cycle form the mechanistic basis for DNA recombination by continuous HJ branch migration. Branch migration allows RuvC to scan DNA until it finds its consensus sequence, where it cleaves and resolves cruciform DNA. The chain is Holliday junction branch migration complex subunit RuvB from Anaeromyxobacter dehalogenans (strain 2CP-C).